Consider the following 156-residue polypeptide: Endoribonuclease YbeY (156 aa).

Zn(2+) is bound by residues His-117, His-121, and His-127.

Belongs to the endoribonuclease YbeY family. Zn(2+) serves as cofactor.

The protein localises to the cytoplasm. Its function is as follows. Single strand-specific metallo-endoribonuclease involved in late-stage 70S ribosome quality control and in maturation of the 3' terminus of the 16S rRNA. The sequence is that of Endoribonuclease YbeY from Shewanella halifaxensis (strain HAW-EB4).